The following is a 39-amino-acid chain: Conotoxin Cl14.5 (39 aa).

The propeptide occupies Pro1 to Gly16. Residue Pro38 is modified to Proline amide.

Contains 2 disulfide bonds. In terms of tissue distribution, expressed by the venom duct.

The protein resides in the secreted. This is Conotoxin Cl14.5 from Californiconus californicus (California cone).